The sequence spans 439 residues: Cln5-like protein 3 (439 aa).

The signal sequence occupies residues 1-24; the sequence is MKNMLNIILTLTIIFIGLIKISIS. N-linked (GlcNAc...) asparagine glycans are attached at residues N93, N112, N122, N138, N168, N219, N268, N289, N304, and N359. A helical membrane pass occupies residues 371-391; it reads IIFISIAIGFGVVIILYISIG.

The protein belongs to the CLN5 family.

The protein resides in the membrane. The polypeptide is Cln5-like protein 3 (cln5lc) (Dictyostelium discoideum (Social amoeba)).